Reading from the N-terminus, the 365-residue chain is Pre-mRNA-splicing factor srp2 (365 aa).

RRM domains lie at 6–69 (LFVG…RIVV) and 100–166 (LIVE…AVTL). The tract at residues 166–365 (LREDPDAANE…SAEGQVAAEW (200 aa)) is disordered. Positions 184–194 (FRSRSPPARRR) are enriched in basic residues. Residues Ser186, Ser188, Ser276, Ser294, Ser296, Ser298, and Ser308 each carry the phosphoserine modification. A compositionally biased stretch (basic and acidic residues) spans 195–307 (YRDDYRRGGD…SPRRDREENR (113 aa)). The segment covering 316–332 (SYSAAPEASMESSAPTE) has biased composition (low complexity). Residues 341–353 (EEQQPLQNHSDVG) show a composition bias toward polar residues.

The protein belongs to the splicing factor SR family. In terms of processing, extensively phosphorylated on serine residues in the RS domain.

It is found in the nucleus. Its function is as follows. Has a role in pre-mRNA splicing where it is involved in spliceosome assembly. The protein is Pre-mRNA-splicing factor srp2 (srp2) of Schizosaccharomyces pombe (strain 972 / ATCC 24843) (Fission yeast).